The chain runs to 374 residues: MSEGVYEKFLAPEEPFPLLSQRGNFSEDATLDVSDFGCQLSSCHRTDPLHRFHSSRWNLTSCGTSVASSECSEELFSSVSVGDQDDCYSLLDDQELTSFDLFPEGSVCSDVSSSISTYWDWSDSEFEWQLPGSDIASGSDVLSDIIPSVPSSPCLVSKRKSKPHRNLDELPWSAMTNDEQVEYIEYLSRKVSTEMGLREQLDIIKIIDPSAQILPTDSEFIIELNCLTDEKLKQVRSYIREHSPRQRPNITRDNWKRSMASNGSTSGVSAHSSSNASMVSSTSSSTASTGSNSSTNISRAHSDGNLATAAERIRDSKKRSKQRKMQQKALRKRQLKEQRQARKERLSGLFMNEEVLSLKVTEEEDHCDDVDVLM.

The disordered stretch occupies residues 238–343 (YIREHSPRQR…QLKEQRQARK (106 aa)). The segment covering 261-295 (SNGSTSGVSAHSSSNASMVSSTSSSTASTGSNSST) has biased composition (low complexity). The span at 315–334 (DSKKRSKQRKMQQKALRKRQ) shows a compositional bias: basic residues. Residues 317–346 (KKRSKQRKMQQKALRKRQLKEQRQARKERL) are a coiled coil.

Belongs to the FAM199 family.

This Danio rerio (Zebrafish) protein is Protein FAM199X (fam199x).